Here is a 231-residue protein sequence, read N- to C-terminus: Pathogenesis-related thaumatin-like protein 3.7 (231 aa).

The N-terminal stretch at 1–27 (MATVSDLALLLVAGLVAISLHMQEAGA) is a signal peptide. Intrachain disulfides connect Cys36–Cys230, Cys77–Cys87, Cys92–Cys98, Cys143–Cys218, Cys148–Cys201, Cys156–Cys166, Cys170–Cys179, and Cys180–Cys188.

Belongs to the thaumatin family.

Functionally, may be involved in disease resistance. This is Pathogenesis-related thaumatin-like protein 3.7 from Cryptomeria japonica (Japanese cedar).